The following is a 530-amino-acid chain: Bifunctional purine biosynthesis protein PurH (530 aa).

One can recognise an MGS-like domain in the interval 1-148 (MNNARPIRRA…KNHKDVTIVV (148 aa)).

This sequence belongs to the PurH family.

The catalysed reaction is (6R)-10-formyltetrahydrofolate + 5-amino-1-(5-phospho-beta-D-ribosyl)imidazole-4-carboxamide = 5-formamido-1-(5-phospho-D-ribosyl)imidazole-4-carboxamide + (6S)-5,6,7,8-tetrahydrofolate. It catalyses the reaction IMP + H2O = 5-formamido-1-(5-phospho-D-ribosyl)imidazole-4-carboxamide. Its pathway is purine metabolism; IMP biosynthesis via de novo pathway; 5-formamido-1-(5-phospho-D-ribosyl)imidazole-4-carboxamide from 5-amino-1-(5-phospho-D-ribosyl)imidazole-4-carboxamide (10-formyl THF route): step 1/1. It participates in purine metabolism; IMP biosynthesis via de novo pathway; IMP from 5-formamido-1-(5-phospho-D-ribosyl)imidazole-4-carboxamide: step 1/1. The sequence is that of Bifunctional purine biosynthesis protein PurH from Aliivibrio fischeri (strain MJ11) (Vibrio fischeri).